The chain runs to 509 residues: Histidine ammonia-lyase (509 aa).

The segment at residues 144 to 146 is a cross-link (5-imidazolinone (Ala-Gly)); sequence ASG. Position 145 is a 2,3-didehydroalanine (Ser) (Ser145).

This sequence belongs to the PAL/histidase family. Contains an active site 4-methylidene-imidazol-5-one (MIO), which is formed autocatalytically by cyclization and dehydration of residues Ala-Ser-Gly.

The protein resides in the cytoplasm. It carries out the reaction L-histidine = trans-urocanate + NH4(+). It participates in amino-acid degradation; L-histidine degradation into L-glutamate; N-formimidoyl-L-glutamate from L-histidine: step 1/3. This is Histidine ammonia-lyase from Pseudoalteromonas atlantica (strain T6c / ATCC BAA-1087).